Reading from the N-terminus, the 696-residue chain is Glutamate-rich protein 6B (696 aa).

Residues 1–10 (MSAENNQLSG) are compositionally biased toward polar residues. The disordered stretch occupies residues 1 to 105 (MSAENNQLSG…EYLEKAGYLE (105 aa)). Acidic residues-rich tracts occupy residues 32 to 44 (EDTE…ESLQ) and 54 to 72 (ESLE…EEEE). Residues 73–91 (YLGKEEYLKEEEYLGKEEH) show a composition bias toward basic and acidic residues.

It belongs to the ERICH6 family.

The chain is Glutamate-rich protein 6B (ERICH6B) from Homo sapiens (Human).